The primary structure comprises 724 residues: 1,3-beta-galactosyl-N-acetylhexosamine phosphorylase Cphy3030 (724 aa).

The active-site Proton donor is Asp316.

Belongs to the glycoside hydrolase 112 family.

The enzyme catalyses beta-D-galactosyl-(1-&gt;3)-N-acetyl-D-glucosamine + phosphate = alpha-D-galactose 1-phosphate + N-acetyl-D-glucosamine. Functionally, reversibly phosphorolyzes beta-D-galactopyranosyl-(1-&gt;3)-N-acetyl-D-glucosamine to form alpha-D-galactopyranose 1-phosphate and acetyl-D-glucosamine. Active towards galacto-N-biose and lacto-N-biose. Does not phosphorolyze galacto-N-tetraose or lacto-N-tetraose. In the reverse reaction has activity toward N-acetyl-D-glucosamine and N-acetyl-D-galactosamine, but not L-rhamnose, D-glucose or D-galactose. This chain is 1,3-beta-galactosyl-N-acetylhexosamine phosphorylase Cphy3030, found in Lachnoclostridium phytofermentans (strain ATCC 700394 / DSM 18823 / ISDg) (Clostridium phytofermentans).